Reading from the N-terminus, the 804-residue chain is Probable copper-exporting P-type ATPase (804 aa).

Over methionine 1–lysine 101 the chain is Cytoplasmic. The region spanning methionine 16–valine 82 is the HMA 1 domain. Positions 27 and 30 each coordinate Cu(+). Residues leucine 102–proline 122 form a helical membrane-spanning segment. Residues tyrosine 123–glutamine 128 are Extracellular-facing. Residues leucine 129 to serine 149 traverse the membrane as a helical segment. The Cytoplasmic portion of the chain corresponds to alanine 150–aspartate 159. Residues valine 160–valine 180 form a helical membrane-spanning segment. Residues leucine 181–serine 186 are Extracellular-facing. The helical transmembrane segment at phenylalanine 187–leucine 204 threads the bilayer. At glutamate 205–valine 339 the chain is on the cytoplasmic side. The chain crosses the membrane as a helical span at residues alanine 340–isoleucine 360. Residues alanine 361–proline 364 are Extracellular-facing. A helical transmembrane segment spans residues leucine 365–glycine 385. Residues leucine 386–leucine 680 lie on the Cytoplasmic side of the membrane. Residue aspartate 424 is the 4-aspartylphosphate intermediate of the active site. ATP-binding positions include glutamate 457–histidine 462 and glycine 490–glycine 501. Mg(2+) contacts are provided by aspartate 618 and aspartate 622. The helical transmembrane segment at isoleucine 681–valine 701 threads the bilayer. Topologically, residues phenylalanine 702 to proline 704 are extracellular. Residues glutamate 705 to leucine 725 form a helical membrane-spanning segment. Over arginine 726 to serine 804 the chain is Cytoplasmic. The 62-residue stretch at glutamate 740 to lysine 801 folds into the HMA 2 domain. The Cu(+) site is built by cysteine 751 and cysteine 754.

Belongs to the cation transport ATPase (P-type) (TC 3.A.3) family. Type IB subfamily. As to quaternary structure, interacts with CopZ probably in the CopZ Cu(+)-bound form.

It is found in the cell membrane. It carries out the reaction Cu(+)(in) + ATP + H2O = Cu(+)(out) + ADP + phosphate + H(+). With respect to regulation, activated by Cu(+) and Ag(+) and inhibited by vanadate. Activated by CopZ in its Cu(+)-bound form. In terms of biological role, probably involved in copper and silver export. This is Probable copper-exporting P-type ATPase (copA) from Archaeoglobus fulgidus (strain ATCC 49558 / DSM 4304 / JCM 9628 / NBRC 100126 / VC-16).